A 195-amino-acid polypeptide reads, in one-letter code: ATP-dependent Clp protease proteolytic subunit 2 (195 aa).

S95 serves as the catalytic Nucleophile. Residue H120 is part of the active site.

Belongs to the peptidase S14 family. Fourteen ClpP subunits assemble into 2 heptameric rings which stack back to back to give a disk-like structure with a central cavity, resembling the structure of eukaryotic proteasomes.

It localises to the cytoplasm. The enzyme catalyses Hydrolysis of proteins to small peptides in the presence of ATP and magnesium. alpha-casein is the usual test substrate. In the absence of ATP, only oligopeptides shorter than five residues are hydrolyzed (such as succinyl-Leu-Tyr-|-NHMec, and Leu-Tyr-Leu-|-Tyr-Trp, in which cleavage of the -Tyr-|-Leu- and -Tyr-|-Trp bonds also occurs).. In terms of biological role, cleaves peptides in various proteins in a process that requires ATP hydrolysis. Has a chymotrypsin-like activity. Plays a major role in the degradation of misfolded proteins. This Methylococcus capsulatus (strain ATCC 33009 / NCIMB 11132 / Bath) protein is ATP-dependent Clp protease proteolytic subunit 2.